We begin with the raw amino-acid sequence, 685 residues long: DNA ligase (685 aa).

NAD(+) contacts are provided by residues 34–38 (DAVFD), 83–84 (SL), and glutamate 113. Catalysis depends on lysine 115, which acts as the N6-AMP-lysine intermediate. Residues arginine 136, glutamate 173, lysine 297, and lysine 321 each coordinate NAD(+). Zn(2+)-binding residues include cysteine 415, cysteine 418, cysteine 433, and cysteine 438. Residues 607-685 (QEKLQFSGKT…EQELMTLISN (79 aa)) form the BRCT domain.

It belongs to the NAD-dependent DNA ligase family. LigA subfamily. Mg(2+) is required as a cofactor. Mn(2+) serves as cofactor.

It carries out the reaction NAD(+) + (deoxyribonucleotide)n-3'-hydroxyl + 5'-phospho-(deoxyribonucleotide)m = (deoxyribonucleotide)n+m + AMP + beta-nicotinamide D-nucleotide.. DNA ligase that catalyzes the formation of phosphodiester linkages between 5'-phosphoryl and 3'-hydroxyl groups in double-stranded DNA using NAD as a coenzyme and as the energy source for the reaction. It is essential for DNA replication and repair of damaged DNA. The chain is DNA ligase from Prochlorococcus marinus (strain SARG / CCMP1375 / SS120).